A 338-amino-acid chain; its full sequence is MKVYYDKDADLSLIKGKSVAIIGYGSQGHAHAQNLNDSGVKVTVGLRRGGASWNKVEKAGLKVAEVADAVKSADVVMILLPDEQIASVYSAEVAPNIKQGASLAFAHGFNVHYGQVVPREDLDVWMVAPKAPGHTVRNTYTQGGGVPHLIAVHADKTGKARDLALSYAAANGGGKAGIIETNFREETETDLFGEQAVLCGGTVELIKAGFETLVEAGYAPEMAYFECLHELKLIVDLIYEGGIANMNYSISNNAEYGEYVTGPRVVTEDTKAAMRQCLKDIQTGEYAKSFILENRAGAPTLLSRRRLTAEHDIEVVGEKLRAMMPWIKANKLVDKSRN.

The KARI N-terminal Rossmann domain maps to 1-181 (MKVYYDKDAD…GGGKAGIIET (181 aa)). NADP(+)-binding positions include 24–27 (YGSQ), Arg47, and Ser52. His107 is a catalytic residue. Gly133 lines the NADP(+) pocket. One can recognise a KARI C-terminal knotted domain in the interval 182 to 327 (NFREETETDL…EKLRAMMPWI (146 aa)). Residues Asp190, Glu194, Glu226, and Glu230 each contribute to the Mg(2+) site. Ser251 contributes to the substrate binding site.

This sequence belongs to the ketol-acid reductoisomerase family. Mg(2+) is required as a cofactor.

It carries out the reaction (2R)-2,3-dihydroxy-3-methylbutanoate + NADP(+) = (2S)-2-acetolactate + NADPH + H(+). The enzyme catalyses (2R,3R)-2,3-dihydroxy-3-methylpentanoate + NADP(+) = (S)-2-ethyl-2-hydroxy-3-oxobutanoate + NADPH + H(+). The protein operates within amino-acid biosynthesis; L-isoleucine biosynthesis; L-isoleucine from 2-oxobutanoate: step 2/4. Its pathway is amino-acid biosynthesis; L-valine biosynthesis; L-valine from pyruvate: step 2/4. Its function is as follows. Involved in the biosynthesis of branched-chain amino acids (BCAA). Catalyzes an alkyl-migration followed by a ketol-acid reduction of (S)-2-acetolactate (S2AL) to yield (R)-2,3-dihydroxy-isovalerate. In the isomerase reaction, S2AL is rearranged via a Mg-dependent methyl migration to produce 3-hydroxy-3-methyl-2-ketobutyrate (HMKB). In the reductase reaction, this 2-ketoacid undergoes a metal-dependent reduction by NADPH to yield (R)-2,3-dihydroxy-isovalerate. The polypeptide is Ketol-acid reductoisomerase (NADP(+)) (Methylibium petroleiphilum (strain ATCC BAA-1232 / LMG 22953 / PM1)).